The primary structure comprises 283 residues: ATP synthase gamma chain (283 aa).

The protein belongs to the ATPase gamma chain family. F-type ATPases have 2 components, CF(1) - the catalytic core - and CF(0) - the membrane proton channel. CF(1) has five subunits: alpha(3), beta(3), gamma(1), delta(1), epsilon(1). CF(0) has three main subunits: a, b and c.

It localises to the cell membrane. Produces ATP from ADP in the presence of a proton gradient across the membrane. The gamma chain is believed to be important in regulating ATPase activity and the flow of protons through the CF(0) complex. This Clostridium kluyveri (strain NBRC 12016) protein is ATP synthase gamma chain.